The sequence spans 156 residues: Organelle RRM domain-containing protein 2, mitochondrial (156 aa).

The N-terminal 28 residues, 1–28 (MAMAMRLPAISRAVTEVASAPVGLRRLF), are a transit peptide targeting the mitochondrion. Residues 56–134 (TNLFVSGLSK…WVIFAEYARP (79 aa)) form the RRM domain. Serine 64 is subject to Phosphoserine. Positions 137 to 148 (QSQSYQPQNNMS) are enriched in polar residues. Residues 137 to 156 (QSQSYQPQNNMSRPPYYGNR) form a disordered region.

Interacts with RBG3/ORRM3. Binds to RBG2/ORRM5.

It localises to the mitochondrion. Involved in C-to-U editing of mitochondrial RNA. Functions as minor mitochondrial editing factor. Controls 6 percent of the mitochondrial editing sites. This chain is Organelle RRM domain-containing protein 2, mitochondrial, found in Arabidopsis thaliana (Mouse-ear cress).